A 288-amino-acid chain; its full sequence is 4-diphosphocytidyl-2-C-methyl-D-erythritol kinase (288 aa).

Lysine 8 is an active-site residue. Residue proline 92 to threonine 102 participates in ATP binding. The active site involves aspartate 134.

This sequence belongs to the GHMP kinase family. IspE subfamily.

It catalyses the reaction 4-CDP-2-C-methyl-D-erythritol + ATP = 4-CDP-2-C-methyl-D-erythritol 2-phosphate + ADP + H(+). It functions in the pathway isoprenoid biosynthesis; isopentenyl diphosphate biosynthesis via DXP pathway; isopentenyl diphosphate from 1-deoxy-D-xylulose 5-phosphate: step 3/6. Its function is as follows. Catalyzes the phosphorylation of the position 2 hydroxy group of 4-diphosphocytidyl-2C-methyl-D-erythritol. The chain is 4-diphosphocytidyl-2-C-methyl-D-erythritol kinase from Clostridium perfringens (strain 13 / Type A).